We begin with the raw amino-acid sequence, 188 residues long: Ribosome maturation factor RimP (188 aa).

Belongs to the RimP family.

The protein localises to the cytoplasm. Functionally, required for maturation of 30S ribosomal subunits. The protein is Ribosome maturation factor RimP of Corynebacterium aurimucosum (strain ATCC 700975 / DSM 44827 / CIP 107346 / CN-1) (Corynebacterium nigricans).